The following is a 266-amino-acid chain: MRMLPLKDKAQVGLWSARYIADRINQFAPTAERPFVLGLPTGGTPLTTYEQLIKLYQQGEVSFANVVTFNMDEYVGLSADHPQSYHRFMFDNFFNHIDIPRENINILDGTASDLLAECAAYEAKITTLGGIKLFFGGVGSDGHIAFNEPASSLRSRTRIKTLTQETLIDNARFFNNDINQVPKLALTVGVGTLMDAEEILILATGHNKALAVQAAIEGSVNHLWTVSALQLHPRGLIVCDEAATMELKVKTLRYFQQLEAPELAKY.

Asp72 serves as the catalytic Proton acceptor; for enolization step. Asp141 acts as the For ring-opening step in catalysis. His143 serves as the catalytic Proton acceptor; for ring-opening step. The For ring-opening step role is filled by Glu148.

The protein belongs to the glucosamine/galactosamine-6-phosphate isomerase family. NagB subfamily. In terms of assembly, homohexamer.

It catalyses the reaction alpha-D-glucosamine 6-phosphate + H2O = beta-D-fructose 6-phosphate + NH4(+). Its pathway is amino-sugar metabolism; N-acetylneuraminate degradation; D-fructose 6-phosphate from N-acetylneuraminate: step 5/5. Its activity is regulated as follows. Allosterically activated by N-acetylglucosamine 6-phosphate (GlcNAc6P). In terms of biological role, catalyzes the reversible isomerization-deamination of glucosamine 6-phosphate (GlcN6P) to form fructose 6-phosphate (Fru6P) and ammonium ion. In Tolumonas auensis (strain DSM 9187 / NBRC 110442 / TA 4), this protein is Glucosamine-6-phosphate deaminase.